Reading from the N-terminus, the 209-residue chain is Ribosomal RNA large subunit methyltransferase E (209 aa).

S-adenosyl-L-methionine contacts are provided by glycine 63, tryptophan 65, aspartate 83, aspartate 99, and aspartate 124. Residue lysine 164 is the Proton acceptor of the active site.

The protein belongs to the class I-like SAM-binding methyltransferase superfamily. RNA methyltransferase RlmE family.

The protein localises to the cytoplasm. The catalysed reaction is uridine(2552) in 23S rRNA + S-adenosyl-L-methionine = 2'-O-methyluridine(2552) in 23S rRNA + S-adenosyl-L-homocysteine + H(+). Specifically methylates the uridine in position 2552 of 23S rRNA at the 2'-O position of the ribose in the fully assembled 50S ribosomal subunit. In Aliivibrio fischeri (strain MJ11) (Vibrio fischeri), this protein is Ribosomal RNA large subunit methyltransferase E.